The following is a 199-amino-acid chain: NAD(P)H dehydrogenase (quinone) (199 aa).

The Flavodoxin-like domain occupies 4–190 (ILVLYYSMYG…KIARYQGEHV (187 aa)). FMN-binding positions include 10-15 (SMYGHI) and 79-81 (TRF). Y12 is an NAD(+) binding site. W99 provides a ligand contact to substrate. H134 is a binding site for FMN.

The protein belongs to the WrbA family. FMN is required as a cofactor.

It carries out the reaction a quinone + NADH + H(+) = a quinol + NAD(+). It catalyses the reaction a quinone + NADPH + H(+) = a quinol + NADP(+). The chain is NAD(P)H dehydrogenase (quinone) from Photorhabdus laumondii subsp. laumondii (strain DSM 15139 / CIP 105565 / TT01) (Photorhabdus luminescens subsp. laumondii).